Here is a 136-residue protein sequence, read N- to C-terminus: Histone H3.1/H3.2 (136 aa).

A disordered region spans residues 1 to 42; sequence MARTKQTARKSTGGKAPRKQLASKAARKAAPATGGVKKPHRY. Position 5 is an N6,N6,N6-trimethyllysine; alternate (Lys5). At Lys5 the chain carries N6,N6-dimethyllysine; alternate. An N6-methyllysine; alternate mark is found at Lys5 and Lys10. Position 10 is an N6-acetyllysine; alternate (Lys10). At Ser11 the chain carries Phosphoserine. Lys15 carries the N6,N6-dimethyllysine; alternate modification. N6-acetyllysine; alternate occurs at positions 15, 19, 24, 28, and 37. An N6-methyllysine; alternate mark is found at Lys19, Lys24, Lys28, and Lys37. Residues 19-32 are compositionally biased toward low complexity; the sequence is KQLASKAARKAAPA. An N6,N6,N6-trimethyllysine; alternate mark is found at Lys28 and Lys37. N6,N6-dimethyllysine; alternate is present on residues Lys28 and Lys37. An N6-acetyllysine mark is found at Lys57 and Lys65. Lys80 is subject to N6,N6,N6-trimethyllysine; alternate. An N6,N6-dimethyllysine; alternate modification is found at Lys80. Position 80 is an N6-methyllysine; alternate (Lys80).

It belongs to the histone H3 family. The nucleosome is a histone octamer containing two molecules each of H2A, H2B, H3 and H4 assembled in one H3-H4 heterotetramer and two H2A-H2B heterodimers. The octamer wraps approximately 147 bp of DNA. Post-translationally, phosphorylated by ark1 to form H3S10ph in a cell cycle-dependent manner during mitosis and meiosis. H3S10ph is also formed by ssp2, promotes subsequent H3K14ac formation by gcn5, and is required for transcriptional activation through TBP recruitment to the promoters. Dephosphorylation is performed by sds21. Mono-, di- and trimethylated by the COMPASS complex to form H3K4me1/2/3. H3K4me activates gene expression by regulating transcription elongation and plays a role in telomere length maintenance. H3K4me enrichment correlates with transcription levels, and occurs in a 5' to 3' gradient with H3K4me3 enrichment at the 5'-end of genes, shifting to H3K4me2 and then H3K4me1. Methylated by clr4 to form H3K9me1. H3K9me1 represents a specific tag for epigenetic transcriptional repression by recruiting swi6/HP1 to methylated histones. Targeting to histone probably involves clr3 and rik1. Essential for silencing of centromeres and directional switching of the mating type. Methylated by set2 to form H3K36me. H3K36me represses gene expression. Methylated by dot1 to form H3K79me. H3K79me is required for association of SIR proteins with telomeric regions and for telomeric silencing. The COMPASS-mediated formation of H3K4me2/3 and the dot1-mediated formation of H3K79me require H2BK123ub1. In terms of processing, acetylation of histone H3 leads to transcriptional activation. H3K14ac formation by gcn5 is promoted by H3S10ph. H3K14ac can also be formed by esa1. H3K56ac formation occurs predominantly in newly synthesized H3 molecules during G1, S and G2/M of the cell cycle and may be involved in DNA repair.

The protein resides in the nucleus. The protein localises to the chromosome. Its function is as follows. Core component of nucleosome. Nucleosomes wrap and compact DNA into chromatin, limiting DNA accessibility to the cellular machineries which require DNA as a template. Histones thereby play a central role in transcription regulation, DNA repair, DNA replication and chromosomal stability. DNA accessibility is regulated via a complex set of post-translational modifications of histones, also called histone code, and nucleosome remodeling. This chain is Histone H3.1/H3.2 (hht1), found in Schizosaccharomyces pombe (strain 972 / ATCC 24843) (Fission yeast).